A 198-amino-acid polypeptide reads, in one-letter code: ATP-dependent Clp protease proteolytic subunit (198 aa).

The active-site Nucleophile is Ser98. Residue His123 is part of the active site.

The protein belongs to the peptidase S14 family. In terms of assembly, fourteen ClpP subunits assemble into 2 heptameric rings which stack back to back to give a disk-like structure with a central cavity, resembling the structure of eukaryotic proteasomes.

Its subcellular location is the cytoplasm. It catalyses the reaction Hydrolysis of proteins to small peptides in the presence of ATP and magnesium. alpha-casein is the usual test substrate. In the absence of ATP, only oligopeptides shorter than five residues are hydrolyzed (such as succinyl-Leu-Tyr-|-NHMec, and Leu-Tyr-Leu-|-Tyr-Trp, in which cleavage of the -Tyr-|-Leu- and -Tyr-|-Trp bonds also occurs).. Cleaves peptides in various proteins in a process that requires ATP hydrolysis. Has a chymotrypsin-like activity. Plays a major role in the degradation of misfolded proteins. The polypeptide is ATP-dependent Clp protease proteolytic subunit (Halothermothrix orenii (strain H 168 / OCM 544 / DSM 9562)).